Here is a 906-residue protein sequence, read N- to C-terminus: Ectonucleotide pyrophosphatase/phosphodiesterase family member 1 (906 aa).

Residues 1–25 (MERDGEQAGQGPRHGPAGNGRELES) are disordered. At 1–58 (MERDGEQAGQGPRHGPAGNGRELESPAAASLLAPMDLGEEPLEKAERARTAKDPNTYK) the chain is on the cytoplasmic side. Ser-25 bears the Phosphoserine mark. Residues 27-34 (AAASLLAP) carry the Di-leucine motif motif. A helical; Signal-anchor for type II membrane protein transmembrane segment spans residues 59–79 (VLSLVLSVCVLTTILGCIFGL). Residues 80–906 (KPSCAKEVKS…THLPIFSQED (827 aa)) lie on the Extracellular side of the membrane. SMB domains lie at 86–126 (EVKS…VEPT) and 127–170 (HIWT…QEKK). Intrachain disulfides connect Cys-90/Cys-104, Cys-94/Cys-122, Cys-102/Cys-115, Cys-108/Cys-114, Cys-131/Cys-148, Cys-136/Cys-166, Cys-146/Cys-159, Cys-152/Cys-158, Cys-177/Cys-223, and Cys-185/Cys-397. Asn-161 carries an N-linked (GlcNAc...) asparagine glycan. Residues 173–573 (VEEACETIDA…APNNESHGSL (401 aa)) form a phosphodiesterase region. The AMP site is built by Asp-200, Thr-238, and Asn-259. Zn(2+)-binding residues include Asp-200 and Thr-238. Residue Thr-238 is the AMP-threonine intermediate of the active site. CMP contacts are provided by Thr-238 and Asn-259. Residues Thr-238 and Asn-259 each coordinate dTMP. GMP-binding residues include Thr-238 and Asn-259. At Thr-238 the chain carries Phosphothreonine. Asn-267 carries N-linked (GlcNAc...) asparagine glycosylation. Residues Leu-272, Lys-277, and Tyr-322 each contribute to the GMP site. AMP is bound by residues Lys-277 and Tyr-322. The CMP site is built by Lys-277 and Tyr-322. DTMP is bound at residue Tyr-322. The N-linked (GlcNAc...) asparagine glycan is linked to Asn-323. AMP is bound at residue Asp-358. Zn(2+) contacts are provided by Asp-358, His-362, Asp-405, and His-406. Asp-358 serves as a coordination point for CMP. Position 358 (Asp-358) interacts with dTMP. Residue Asp-358 coordinates GMP. His-362 lines the 2',3'-cGAMP pocket. His-406 provides a ligand contact to AMP. His-406 contributes to the CMP binding site. DTMP is bound at residue His-406. His-406 is a GMP binding site. 6 disulfide bridges follow: Cys-413–Cys-512, Cys-462–Cys-849, Cys-596–Cys-653, Cys-607–Cys-707, Cys-609–Cys-692, and Cys-819–Cys-829. Asn-459 carries N-linked (GlcNAc...) asparagine glycosylation. Ser-514 is a binding site for 2',3'-cGAMP. His-517 is an AMP binding site. Residue His-517 participates in Zn(2+) binding. Residue His-517 coordinates CMP. Position 517 (His-517) interacts with dTMP. Position 517 (His-517) interacts with GMP. N-linked (GlcNAc...) asparagine glycosylation is found at Asn-567 and Asn-624. Positions 579-628 (KPIYTPSHPKEESFLSQCPIKSVSSDLGCTCDPSIVPIMDFEKQFNLTTD) are linker. The interval 635-906 (SMTVPNGRPR…THLPIFSQED (272 aa)) is nuclease-like domain. The Ca(2+) site is built by Asp-781, Asp-783, Asp-785, Arg-787, and Asp-789.

It belongs to the nucleotide pyrophosphatase/phosphodiesterase family. In terms of assembly, ectonucleotide pyrophosphatase/phosphodiesterase family member 1: Homodimer. Ectonucleotide pyrophosphatase/phosphodiesterase family member 1: Interacts with INSR; leading to inhibit INSR autophosphorylation and subsequent activation of INSR kinase activity. Ectonucleotide pyrophosphatase/phosphodiesterase family member 1, secreted form: Monomeric. Requires Zn(2+) as cofactor. Post-translationally, the secreted form is produced through cleavage at Lys-85 by intracellular processing.

It localises to the cell membrane. It is found in the basolateral cell membrane. Its subcellular location is the secreted. It catalyses the reaction Hydrolytically removes 5'-nucleotides successively from the 3'-hydroxy termini of 3'-hydroxy-terminated oligonucleotides.. It carries out the reaction a ribonucleoside 5'-triphosphate + H2O = a ribonucleoside 5'-phosphate + diphosphate + H(+). The catalysed reaction is ATP + H2O = AMP + diphosphate + H(+). The enzyme catalyses UTP + H2O = UMP + diphosphate + H(+). It catalyses the reaction GTP + H2O = GMP + diphosphate + H(+). It carries out the reaction CTP + H2O = CMP + diphosphate + H(+). The catalysed reaction is 2',3'-cGAMP + 2 H2O = GMP + AMP + 2 H(+). The enzyme catalyses P(1),P(4)-bis(5'-adenosyl) tetraphosphate + H2O = AMP + ATP + 2 H(+). It catalyses the reaction 3',5'-cyclic AMP + H2O = AMP + H(+). At low concentrations of ATP, a phosphorylated intermediate is formed which inhibits further hydrolysis. Its function is as follows. Nucleotide pyrophosphatase that generates diphosphate (PPi) and functions in bone mineralization and soft tissue calcification by regulating pyrophosphate levels. PPi inhibits bone mineralization and soft tissue calcification by binding to nascent hydroxyapatite crystals, thereby preventing further growth of these crystals. Preferentially hydrolyzes ATP, but can also hydrolyze other nucleoside 5' triphosphates such as GTP, CTP and UTP to their corresponding monophosphates with release of pyrophosphate, as well as diadenosine polyphosphates, and also 3',5'-cAMP to AMP. May also be involved in the regulation of the availability of nucleotide sugars in the endoplasmic reticulum and Golgi, and the regulation of purinergic signaling. Inhibits ectopic joint calcification and maintains articular chondrocytes by repressing hedgehog signaling; it is however unclear whether hedgehog inhibition is direct or indirect. Appears to modulate insulin sensitivity. Also involved in melanogenesis. Also able to hydrolyze 2',3'-cGAMP (cyclic GMP-AMP), a second messenger that activates TMEM173/STING and triggers type-I interferon production. 2',3'-cGAMP degradation takes place in the lumen or extracellular space, and not in the cytosol where it is produced; the role of 2',3'-cGAMP hydrolysis is therefore unclear. Not able to hydrolyze the 2',3'-cGAMP linkage isomer 3'-3'-cGAMP. In Rattus norvegicus (Rat), this protein is Ectonucleotide pyrophosphatase/phosphodiesterase family member 1.